The primary structure comprises 340 residues: Ketol-acid reductoisomerase (NADP(+)) (340 aa).

A KARI N-terminal Rossmann domain is found at 2 to 182; that stretch reads AELYYDNQAD…GCTRAGVLRT (181 aa). Residues 25-28, Ser51, Ser53, and 83-86 contribute to the NADP(+) site; these read FGSQ and DIGQ. His108 is an active-site residue. Gly134 contributes to the NADP(+) binding site. The KARI C-terminal knotted domain maps to 183-328; the sequence is TFAEETETDL…RELRRMMPFV (146 aa). Asp191, Glu195, Glu227, and Glu231 together coordinate Mg(2+). Residue Ser252 coordinates substrate.

It belongs to the ketol-acid reductoisomerase family. It depends on Mg(2+) as a cofactor.

It catalyses the reaction (2R)-2,3-dihydroxy-3-methylbutanoate + NADP(+) = (2S)-2-acetolactate + NADPH + H(+). It carries out the reaction (2R,3R)-2,3-dihydroxy-3-methylpentanoate + NADP(+) = (S)-2-ethyl-2-hydroxy-3-oxobutanoate + NADPH + H(+). Its pathway is amino-acid biosynthesis; L-isoleucine biosynthesis; L-isoleucine from 2-oxobutanoate: step 2/4. It functions in the pathway amino-acid biosynthesis; L-valine biosynthesis; L-valine from pyruvate: step 2/4. Its function is as follows. Involved in the biosynthesis of branched-chain amino acids (BCAA). Catalyzes an alkyl-migration followed by a ketol-acid reduction of (S)-2-acetolactate (S2AL) to yield (R)-2,3-dihydroxy-isovalerate. In the isomerase reaction, S2AL is rearranged via a Mg-dependent methyl migration to produce 3-hydroxy-3-methyl-2-ketobutyrate (HMKB). In the reductase reaction, this 2-ketoacid undergoes a metal-dependent reduction by NADPH to yield (R)-2,3-dihydroxy-isovalerate. This chain is Ketol-acid reductoisomerase (NADP(+)), found in Chloroflexus aggregans (strain MD-66 / DSM 9485).